The chain runs to 209 residues: N-(5'-phosphoribosyl)anthranilate isomerase (209 aa).

Belongs to the TrpF family.

It carries out the reaction N-(5-phospho-beta-D-ribosyl)anthranilate = 1-(2-carboxyphenylamino)-1-deoxy-D-ribulose 5-phosphate. It participates in amino-acid biosynthesis; L-tryptophan biosynthesis; L-tryptophan from chorismate: step 3/5. This chain is N-(5'-phosphoribosyl)anthranilate isomerase, found in Pyrobaculum islandicum (strain DSM 4184 / JCM 9189 / GEO3).